The following is an 841-amino-acid chain: Phosphatidylglycerol lysyltransferase (841 aa).

At 1-8 (MTKELRSK) the chain is on the cytoplasmic side. A helical transmembrane segment spans residues 9-29 (LFTILKIAFALTLFTIVAITL). The Extracellular portion of the chain corresponds to 30-52 (YKELSHINLKDAIKSFSKINRFW). Residues 53 to 73 (LVALFLSGGASIIVLSIYDVI) traverse the membrane as a helical segment. Topologically, residues 74-89 (LAKTLKLKIGLAKTIR) are cytoplasmic. A helical membrane pass occupies residues 90 to 110 (IGYIVNALNAVVGFGGFIGAS). Topologically, residues 111 to 129 (VRFLFYKNTTDDKKALFHT) are extracellular. The helical transmembrane segment at 130–150 (ISIVLISMLTGLSLLSILVVI) threads the bilayer. Topologically, residues 151-164 (HVFDISHIFTPYPW) are cytoplasmic. The helical transmembrane segment at 165–185 (VKWLMYVVALFLPIFVVFTII) threads the bilayer. At 186-193 (KPVQKTHR) the chain is on the extracellular side. The chain crosses the membrane as a helical span at residues 194 to 216 (LLGVYCTIVSGVEWFVAALVLYM). Residues 217–229 (SMAIVGVQIPFAT) are Cytoplasmic-facing. Residues 230–250 (FMGIFILAALSGLISFIPGGF) form a helical membrane-spanning segment. The Extracellular portion of the chain corresponds to 251–270 (GTFDLVVLLGLKALNVNEEA). Residues 271–291 (IVLGLSLYRFAYYLFPVLIAL) form a helical membrane-spanning segment. Topologically, residues 292–336 (ILSTFEFRSTAKRYWEDSRILVPVKDMTSLLGSYQKDIIARIPSF) are cytoplasmic. A helical membrane pass occupies residues 337-357 (AIALLLLFTSLVFFLNNLTII). Topologically, residues 358–367 (YDGLYDPNHY) are extracellular. Residues 368–388 (IYYIIVSIHTCACLLLLLNVI) form a helical membrane-spanning segment. Over 389 to 392 (GVYK) the chain is Cytoplasmic. A helical membrane pass occupies residues 393 to 413 (LSKRAILFSIISVLFIFIATA). The Extracellular portion of the chain corresponds to 414-415 (YT). A helical transmembrane segment spans residues 416 to 436 (YASFILLSWLTVIFILLLVFY). Over 437–448 (RRARVIKRPFRY) the chain is Cytoplasmic. A helical transmembrane segment spans residues 449–469 (SKLLLSVITGAIILYINHLVI). Residues 470–489 (KSTFYSLEIYHIEMLTSILR) lie on the Extracellular side of the membrane. Residues 490-510 (YYFWITILLVAIIVGVIVWWF) traverse the membrane as a helical segment. At 511 to 841 (EYRYRSSNSR…KVMRVIRKNN (331 aa)) the chain is on the cytoplasmic side.

This sequence belongs to the LPG synthase family.

It is found in the cell membrane. It catalyses the reaction L-lysyl-tRNA(Lys) + a 1,2-diacyl-sn-glycero-3-phospho-(1'-sn-glycerol) = a 1,2-diacyl-sn-glycero-3-phospho-1'-(3'-O-L-lysyl)-sn-glycerol + tRNA(Lys). In terms of biological role, catalyzes the transfer of a lysyl group from L-lysyl-tRNA(Lys) to membrane-bound phosphatidylglycerol (PG), which produces lysylphosphatidylglycerol (LPG), a major component of the bacterial membrane with a positive net charge. LPG synthesis contributes to bacterial virulence as it is involved in the resistance mechanism against cationic antimicrobial peptides (CAMP) produces by the host's immune system (defensins, cathelicidins) and by the competing microorganisms (bacteriocins). In fact, the modification of anionic phosphatidylglycerol with positively charged L-lysine results in repulsion of the peptides. In Staphylococcus xylosus, this protein is Phosphatidylglycerol lysyltransferase (mprF).